A 657-amino-acid chain; its full sequence is Pentatricopeptide repeat-containing protein At2g37310 (657 aa).

PPR repeat units lie at residues 21 to 55 (DGGAYGHLIQHFTRHRLPLHVLQLHARIVVFSIKP), 56 to 86 (DNFLASKLISFYTRQDRFRQALHVFDEITVR), 87 to 121 (NAFSYNALLIAYTSREMYFDAFSLFLSWIGSSCYS), 128 to 165 (DSISISCVLKALSGCDDFWLGSLARQVHGFVIRGGFDS), 166 to 196 (DVFVGNGMITYYTKCDNIESARKVFDEMSER), 197 to 232 (DVVSWNSMISGYSQSGSFEDCKKMYKAMLACSDFKP), 233 to 267 (NGVTVISVFQACGQSSDLIFGLEVHKKMIENHIQM), 268 to 298 (DLSLCNAVIGFYAKCGSLDYARALFDEMSEK), 299 to 333 (DSVTYGAIISGYMAHGLVKEAMALFSEMESIGLST), 334 to 364 (WNAMISGLMQNNHHEEVINSFREMIRCGSRP), 365 to 399 (NTVTLSSLLPSLTYSSNLKGGKEIHAFAIRNGADN), 400 to 430 (NIYVTTSIIDNYAKLGFLLGAQRVFDNCKDR), 431 to 465 (SLIAWTAIITAYAVHGDSDSACSLFDQMQCLGTKP), 466 to 501 (DDVTLTAVLSAFAHSGDSDMAQHIFDSMLTKYDIEP), and 502 to 536 (GVEHYACMVSVLSRAGKLSDAMEFISKMPIDPIAK). The type E motif stretch occupies residues 537–612 (VWGALLNGAS…IPGTSWIETE (76 aa)). Residues 613-643 (KGLRSFIAKDSSCERSKEMYEIIEGLVESMS) are type E(+) motif.

This sequence belongs to the PPR family. PCMP-E subfamily.

The chain is Pentatricopeptide repeat-containing protein At2g37310 (PCMP-E49) from Arabidopsis thaliana (Mouse-ear cress).